A 718-amino-acid polypeptide reads, in one-letter code: Nucleolar protein 11 (718 aa).

N6-methyllysine is present on lysine 346.

In terms of assembly, interacts with UTP4. Interacts with FBL/fibrillarin in a transcription-dependent manner. May associate with the proposed t-UTP subcomplex of the SSU processome containing at least UTP4, WDR43, HEATR1, UTP15, WDR75.

The protein localises to the nucleus. It is found in the nucleolus. Functionally, ribosome biogenesis factor. May be required for both optimal rDNA transcription and small subunit (SSU) pre-rRNA processing at sites A', A0, 1 and 2b. The sequence is that of Nucleolar protein 11 (NOL11) from Bos taurus (Bovine).